A 314-amino-acid chain; its full sequence is Olfactory receptor 1Q1 (314 aa).

Over 1–25 (MDNSNWTSVSHFVLLGISTHPEEQI) the chain is Extracellular. N5 carries an N-linked (GlcNAc...) asparagine glycan. The chain crosses the membrane as a helical span at residues 26 to 49 (PLFLVFSLMYAINISGNLAIITLI). The Cytoplasmic segment spans residues 50–57 (LSAPRLHI). Residues 58–79 (PMYIFLSNLALTDICFTSTTVP) traverse the membrane as a helical segment. Topologically, residues 80 to 100 (KMLQIIFSPTKVISYTGCLAQ) are extracellular. A disulfide bond links C97 and C189. Residues 101–120 (TYFFICFAVMENFILAVMAY) form a helical membrane-spanning segment. Over 121–139 (DRYIAICHPFHYTMILTRM) the chain is Cytoplasmic. A helical membrane pass occupies residues 140–158 (LCVKMVVMCHALSHLHAML). At 159 to 195 (HTFLIGQLIFCADNRIPHFFCDLYALMKISCTSTYLN) the chain is on the extracellular side. A helical membrane pass occupies residues 196-219 (TLMIHTEGAVVISGALAFITASYA). At 220-236 (CIILVVLRIPSAKGRWK) the chain is on the cytoplasmic side. The chain crosses the membrane as a helical span at residues 237–259 (TFSTCGSHLTVVAIFYGTLSWVY). The Extracellular segment spans residues 260–272 (FRPLSSYSVTKGR). Residues 273–292 (IITVVYTVVTPMLNPFIYSL) form a helical membrane-spanning segment. Topologically, residues 293–314 (RNGDVKGGFMKWMSRMQTFFFR) are cytoplasmic.

Belongs to the G-protein coupled receptor 1 family.

It is found in the cell membrane. In terms of biological role, odorant receptor. The protein is Olfactory receptor 1Q1 (OR1Q1) of Homo sapiens (Human).